The sequence spans 458 residues: O-acetyltransferase dmxR13 (458 aa).

The disordered stretch occupies residues glutamate 211 to proline 231. Residues proline 219 to proline 231 show a composition bias toward pro residues.

This sequence belongs to the trichothecene 3-O-acetyltransferase family.

The protein operates within secondary metabolite biosynthesis. In terms of biological role, O-acetyltransferase; part of the gene cluster that mediates the biosynthesis of the dimeric xanthones cryptosporioptides. The pathway begins with the synthesis of atrochrysone thioester by the polyketide synthase dmx-nrPKS. The atrochrysone carboxyl ACP thioesterase dmxR1 then breaks the thioester bond and releases the atrochrysone carboxylic acid from dmx-nrPKS. Atrochrysone carboxylic acid is decarboxylated by the decarboxylase dmxR15, and oxidized by the anthrone oxygenase dmxR16 to yield emodin. Emodin is then reduced to emodin hydroquinone by the oxidoreductase dmxR7. A-ring reduction by the short chain dehydrogenase dmxR18, dehydration by the scytalone dehydratase-like protein dmxR17 and probable spontaneous re-oxidation, results in overall deoxygenation to chrysophanol. Baeyer-Villiger oxidation by the Baeyer-Villiger monooxygenase (BVMO) dmxR6 then yields monodictylactone in equilibrium with monodictyphenone. In the case of the cryptosporioptides biosynthesis, monodictylactone is reduced at C-12 to an alcohol (by the short chain dehydrogenases dmxR12 or dmxR8) and hydroxylated at C-5 by dmxR9, yielding the electron-rich aromatic which could eliminate H(2)O to form the ortho-quinonemethide, followed by tautomerisation to paraquinone and complete the formal reduction to produce the 10-methylgroup. Conjugate addition of C-4a-OH to the resulting paraquinone by the monooxygenase dmxR10 then gives cyclohexadienone, which is then reduced at C-5 by the short chain dehydrogenase dmxR3 to give the dihydroxanthone. The 6,7-epoxide in the cryptosporioptides could be introduced by the cytochrome P450 monooxygenase dmxL3. The highly reducing PKS dmxL2 manufactures butyrate, which is further carboxylated by dmxL1 to form ethylmalonate. It is not yet clear whether the carboxylation occurs while the butyrate is attached to the ACP of dmxL2, but this unusual fungal metabolite could then be esterified to O-5 by the O-acetyltransferase dmxR13. Finally, dimerization performed by dmxR5 gives the observed dimers cryptosporioptides A, B and C as the final products of the pathway. This Cryptosporiopsis sp. (strain 8999) protein is O-acetyltransferase dmxR13.